A 398-amino-acid polypeptide reads, in one-letter code: Argininosuccinate synthase (398 aa).

8-16 is an ATP binding site; the sequence is AYSGGLDTS. Tyr-87 is a binding site for L-citrulline. Gly-117 contributes to the ATP binding site. L-aspartate contacts are provided by Thr-119, Asn-123, and Asp-124. Asn-123 lines the L-citrulline pocket. The L-citrulline site is built by Arg-127, Ser-175, Glu-259, and Tyr-271.

Belongs to the argininosuccinate synthase family. Type 1 subfamily. Homotetramer.

The protein localises to the cytoplasm. The enzyme catalyses L-citrulline + L-aspartate + ATP = 2-(N(omega)-L-arginino)succinate + AMP + diphosphate + H(+). It functions in the pathway amino-acid biosynthesis; L-arginine biosynthesis; L-arginine from L-ornithine and carbamoyl phosphate: step 2/3. The protein is Argininosuccinate synthase of Corynebacterium kroppenstedtii (strain DSM 44385 / JCM 11950 / CIP 105744 / CCUG 35717).